Here is a 358-residue protein sequence, read N- to C-terminus: MVASFSWRLLSPRFLGGFVLGAAASSASCVAALQLYDKREPELAPVAPEEKDPLEEYGFPLTGTEARQYINHALAYDPAKRTPKWVIEHLSRTKTVGSADRKHCKFKPDPNIPKMFSATNEDYLGSGWTRGHMAPAGDNKFSTEAMAETFYLSNIVPQNYENNAGFWNRMEMYCRDLTKRFEDVWVVSGPLELPTSHEDGKKRVTYEVIGADEVAVPSHLYKVILVREKGSEQPLAIGAFVVPNSPIGFDHQLPEYKVQLEDLEKMSGLLFFPQLDRDKGLKPLCDVDSCRLIQLHEFKLYIAARRVGGARNLQKLERILSELKEEGITPDGYLLDLYEKKRKEFSLKSGTDRDERKG.

Histidine 132 functions as the Proton acceptor in the catalytic mechanism. Asparagine 163 contributes to the a divalent metal cation binding site.

This sequence belongs to the DNA/RNA non-specific endonuclease family. Homodimer. Requires a divalent metal cation as cofactor.

The protein resides in the mitochondrion inner membrane. Functionally, endo/exonuclease with nicking activity towards supercoiled DNA, a preference for single-stranded DNA and 5'-3' exonuclease activity. This chain is Nuclease EXOG, mitochondrial (exog), found in Xenopus laevis (African clawed frog).